The sequence spans 372 residues: GDP-mannose 4,6-dehydratase (372 aa).

Residues 8-13 (GITGQD), 63-64 (DL), 85-89 (LGAQS), and Tyr100 each bind NADP(+). The active site involves Thr132. Catalysis depends on nucleophile residues Glu134 and Tyr156. Residues Lys160, His186, and Arg191 each contribute to the NADP(+) site.

Belongs to the NAD(P)-dependent epimerase/dehydratase family. GDP-mannose 4,6-dehydratase subfamily. NADP(+) serves as cofactor.

It carries out the reaction GDP-alpha-D-mannose = GDP-4-dehydro-alpha-D-rhamnose + H2O. It functions in the pathway bacterial outer membrane biogenesis; LPS O-antigen biosynthesis. It participates in nucleotide-sugar biosynthesis; GDP-L-fucose biosynthesis via de novo pathway; GDP-L-fucose from GDP-alpha-D-mannose: step 1/2. In terms of biological role, catalyzes the conversion of GDP-D-mannose to GDP-4-dehydro-6-deoxy-D-mannose. This chain is GDP-mannose 4,6-dehydratase, found in Yersinia enterocolitica serotype O:8 / biotype 1B (strain NCTC 13174 / 8081).